The chain runs to 310 residues: Olfactory receptor 4C11 (310 aa).

Residues 1–23 lie on the Extracellular side of the membrane; the sequence is MQQNNSVPEFILLGLTQDPLRQK. N-linked (GlcNAc...) asparagine glycosylation is present at asparagine 4. The chain crosses the membrane as a helical span at residues 24 to 47; sequence IVFVIFLIFYMGTVVGNMLIIVTI. Residues 48–55 lie on the Cytoplasmic side of the membrane; the sequence is KSSRTLGS. The chain crosses the membrane as a helical span at residues 56 to 77; it reads PMYFFLFYLSFADSCFSTSTAP. At 78–98 the chain is on the extracellular side; that stretch reads RLIVDALSEKKIITYNECMTQ. Cysteine 95 and cysteine 187 form a disulfide bridge. A helical transmembrane segment spans residues 99–118; sequence VFALHLFGCMEIFVLILMAV. Topologically, residues 119 to 137 are cytoplasmic; that stretch reads DRYVAICKPLRYPTIMSQQ. The chain crosses the membrane as a helical span at residues 138-156; it reads VCIILIVLAWIGSLIHSTA. The Extracellular segment spans residues 157 to 193; that stretch reads QIILALRLPFCGPYLIDHYCCDLQPLLKLACMDTYMI. A helical membrane pass occupies residues 194 to 217; it reads NLLLVSNSGAICSSSFMILIISYI. At 218 to 233 the chain is on the cytoplasmic side; sequence VILHSLRNHSAKGKKK. The chain crosses the membrane as a helical span at residues 234–256; it reads ALSACTSHIIVVILFFGPCIFIY. At 257–267 the chain is on the extracellular side; sequence TRPPTTFPMDK. A helical transmembrane segment spans residues 268-287; it reads MVAVFYTIGTPFLNPLIYTL. Over 288–310 the chain is Cytoplasmic; it reads RNAEVKNAMRKLWHGKIISENKG.

Belongs to the G-protein coupled receptor 1 family.

The protein resides in the cell membrane. Its function is as follows. Odorant receptor. This is Olfactory receptor 4C11 (OR4C11) from Homo sapiens (Human).